Reading from the N-terminus, the 788-residue chain is Endonuclease MutS2 (788 aa).

332–339 is an ATP binding site; that stretch reads GPNTGGKT. One can recognise a Smr domain in the interval 713–788; sequence IDLRGLDSEE…GTGVTVVELK (76 aa).

The protein belongs to the DNA mismatch repair MutS family. MutS2 subfamily. Homodimer. Binds to stalled ribosomes, contacting rRNA.

Functionally, endonuclease that is involved in the suppression of homologous recombination and thus may have a key role in the control of bacterial genetic diversity. In terms of biological role, acts as a ribosome collision sensor, splitting the ribosome into its 2 subunits. Detects stalled/collided 70S ribosomes which it binds and splits by an ATP-hydrolysis driven conformational change. Acts upstream of the ribosome quality control system (RQC), a ribosome-associated complex that mediates the extraction of incompletely synthesized nascent chains from stalled ribosomes and their subsequent degradation. Probably generates substrates for RQC. In Clostridium acetobutylicum (strain ATCC 824 / DSM 792 / JCM 1419 / IAM 19013 / LMG 5710 / NBRC 13948 / NRRL B-527 / VKM B-1787 / 2291 / W), this protein is Endonuclease MutS2.